Consider the following 338-residue polypeptide: Lipoate-protein ligase A (338 aa).

In terms of domain architecture, BPL/LPL catalytic spans 29–216 (PATQRVLFLW…AFFSHYGERV (188 aa)). Residues arginine 71, 76 to 79 (GAVF), and lysine 134 contribute to the ATP site. Position 134 (lysine 134) interacts with (R)-lipoate.

It belongs to the LplA family. In terms of assembly, monomer.

The protein localises to the cytoplasm. It carries out the reaction L-lysyl-[lipoyl-carrier protein] + (R)-lipoate + ATP = N(6)-[(R)-lipoyl]-L-lysyl-[lipoyl-carrier protein] + AMP + diphosphate + H(+). The protein operates within protein modification; protein lipoylation via exogenous pathway; protein N(6)-(lipoyl)lysine from lipoate: step 1/2. It participates in protein modification; protein lipoylation via exogenous pathway; protein N(6)-(lipoyl)lysine from lipoate: step 2/2. In terms of biological role, catalyzes both the ATP-dependent activation of exogenously supplied lipoate to lipoyl-AMP and the transfer of the activated lipoyl onto the lipoyl domains of lipoate-dependent enzymes. This chain is Lipoate-protein ligase A, found in Klebsiella pneumoniae (strain 342).